The sequence spans 333 residues: D-threonate 4-phosphate dehydrogenase (333 aa).

Positions 140 and 141 each coordinate substrate. 3 residues coordinate a divalent metal cation: His-170, His-214, and His-270. The substrate site is built by Lys-278, Asn-287, and Arg-296.

Belongs to the PdxA family. PdxA2 subfamily. As to quaternary structure, homodimer. Requires a divalent metal cation as cofactor.

It carries out the reaction 4-O-phospho-D-threonate + NAD(+) = dihydroxyacetone phosphate + CO2 + NADH. Functionally, catalyzes the NAD-dependent oxidation and subsequent decarboxylation of D-threonate 4-phosphate to produce dihydroxyacetone phosphate (DHAP). Can also use 4-hydroxy-L-threonine 4-phosphate as substrate. The sequence is that of D-threonate 4-phosphate dehydrogenase from Cupriavidus necator (strain ATCC 17699 / DSM 428 / KCTC 22496 / NCIMB 10442 / H16 / Stanier 337) (Ralstonia eutropha).